Consider the following 383-residue polypeptide: Na(+)/H(+) antiporter NhaA (383 aa).

Helical transmembrane passes span 10 to 30, 56 to 76, 91 to 111, 121 to 141, 150 to 170, 174 to 194, 206 to 226, 254 to 274, 289 to 308, 327 to 347, and 355 to 375; these read LIGG…NNSP, LMHW…GLEI, IITP…IYLS, GWAI…ALLG, LLVI…IAIF, SLSL…IICN, VVLG…ATLA, PWII…ISFS, IIWG…LAVF, GISL…VLAF, and AIKI…YIVL.

It belongs to the NhaA Na(+)/H(+) (TC 2.A.33) antiporter family.

It is found in the cell inner membrane. It catalyses the reaction Na(+)(in) + 2 H(+)(out) = Na(+)(out) + 2 H(+)(in). Functionally, na(+)/H(+) antiporter that extrudes sodium in exchange for external protons. This Francisella tularensis subsp. tularensis (strain SCHU S4 / Schu 4) protein is Na(+)/H(+) antiporter NhaA.